The sequence spans 323 residues: Putative gluconeogenesis factor (323 aa).

The protein belongs to the gluconeogenesis factor family.

The protein localises to the cytoplasm. Its function is as follows. Required for morphogenesis under gluconeogenic growth conditions. This Thermoanaerobacterium thermosulfurigenes (Clostridium thermosulfurogenes) protein is Putative gluconeogenesis factor.